Here is a 182-residue protein sequence, read N- to C-terminus: Adenine phosphoribosyltransferase (182 aa).

Belongs to the purine/pyrimidine phosphoribosyltransferase family. As to quaternary structure, homodimer.

Its subcellular location is the cytoplasm. It carries out the reaction AMP + diphosphate = 5-phospho-alpha-D-ribose 1-diphosphate + adenine. The protein operates within purine metabolism; AMP biosynthesis via salvage pathway; AMP from adenine: step 1/1. In terms of biological role, catalyzes a salvage reaction resulting in the formation of AMP, that is energically less costly than de novo synthesis. The polypeptide is Adenine phosphoribosyltransferase (Pseudomonas syringae pv. syringae (strain B728a)).